The following is a 209-amino-acid chain: Ras-like protein (209 aa).

15–22 provides a ligand contact to GTP; sequence GGGGEGKS. Positions 37–45 match the Effector region motif; that stretch reads YDPTIEESY. GTP contacts are provided by residues 62-66 and 121-124; these read DTAGQ and NKCD. Residues Cys-202 and Cys-203 are each lipidated (S-palmitoyl cysteine). Cys-206 is subject to Cysteine methyl ester. Cys-206 is lipidated: S-geranylgeranyl cysteine. Positions 207 to 209 are cleaved as a propeptide — removed in mature form; the sequence is IVM.

The protein belongs to the small GTPase superfamily. Ras family.

The protein localises to the cell membrane. The catalysed reaction is GTP + H2O = GDP + phosphate + H(+). Alternates between an inactive form bound to GDP and an active form bound to GTP. Activated by a guanine nucleotide-exchange factor (GEF) and inactivated by a GTPase-activating protein (GAP). In Laccaria bicolor (Bicoloured deceiver), this protein is Ras-like protein.